The chain runs to 439 residues: Adenylosuccinate synthetase (439 aa).

Residues 25–31 (GDEGKGK), 53–55 (GHT), and K62 each bind GTP. D26 (proton acceptor) is an active-site residue. Mg(2+) is bound by residues D26 and G53. Residues 26–29 (DEGK) and 51–54 (NAGH) each bind IMP. The active-site Proton donor is H54. Positions 141, 155, 232, and 247 each coordinate IMP. T307 contributes to the GTP binding site. 307–313 (TTTNRPR) is a binding site for substrate. R311 lines the IMP pocket. GTP-binding positions include R313, 339–341 (KLD), and 425–427 (GVG).

It belongs to the adenylosuccinate synthetase family. In terms of assembly, homodimer. Requires Mg(2+) as cofactor.

It is found in the cytoplasm. The enzyme catalyses IMP + L-aspartate + GTP = N(6)-(1,2-dicarboxyethyl)-AMP + GDP + phosphate + 2 H(+). Its pathway is purine metabolism; AMP biosynthesis via de novo pathway; AMP from IMP: step 1/2. In terms of biological role, plays an important role in the salvage pathway for purine nucleotide biosynthesis. Catalyzes the first commited step in the biosynthesis of AMP from IMP. This chain is Adenylosuccinate synthetase, found in Plasmodium chabaudi chabaudi.